The primary structure comprises 818 residues: Protein TOC75-3, chloroplastic (818 aa).

The transit peptide at methionine 1–valine 79 directs the protein to the chloroplast. Residues threonine 15 to serine 41 show a composition bias toward low complexity. The interval threonine 15–aspartate 67 is disordered. Basic and acidic residues predominate over residues proline 57–aspartate 67. Residues alanine 80–alanine 140 constitute a chloroplast; outer membrane transit peptide. POTRA domains lie at aspartate 141–serine 246, threonine 247–glycine 364, and aspartate 365–leucine 448. The Chloroplast intermembrane portion of the chain corresponds to aspartate 141 to serine 473. The beta stranded transmembrane segment at phenylalanine 474–phenylalanine 482 threads the bilayer. At glutamate 483 to aspartate 509 the chain is on the cytoplasmic side. Residues leucine 510 to histidine 518 form a beta stranded membrane-spanning segment. Residues proline 519 to arginine 562 lie on the Chloroplast intermembrane side of the membrane. A beta stranded transmembrane segment spans residues alanine 563–threonine 570. Residues glutamate 571–lysine 578 are Cytoplasmic-facing. A beta stranded membrane pass occupies residues phenylalanine 579–glutamate 586. Topologically, residues glutamate 587 to proline 693 are chloroplast intermembrane. A beta stranded membrane pass occupies residues proline 694 to tyrosine 702. Topologically, residues glycine 703–alanine 714 are cytoplasmic. The beta stranded transmembrane segment at phenylalanine 715–valine 723 threads the bilayer. At arginine 724 to serine 785 the chain is on the chloroplast intermembrane side. Residues tyrosine 786–leucine 792 form a beta stranded membrane-spanning segment. Over glycine 793–glycine 806 the chain is Cytoplasmic. Residues threonine 807–phenylalanine 814 traverse the membrane as a beta stranded segment. At glycine 815 to tyrosine 818 the chain is on the chloroplast intermembrane side.

The protein belongs to the TOC75 family. As to quaternary structure, part of the TOC core complex that includes a protein for the specific recognition of transit peptides surrounded by a ring composed of four proteins forming translocation channels, and four to five GTP-binding proteins providing energy. This core complex can interact with components of the TIC complex to form a larger import complex. Chloroplastic protein precursors such as prSS (precursor of the RuBisCO small subunit) also interact with these complexes. The TOC complex contains a specific subset of polar lipids such as digalactosyldiacylglyceride (DGDG), phosphatidylcholine (PC) and phosphatidylglycerol (PG). TOC75-3 interacts with TOC34/OEP34, TOC159/TOC86, TOC132 and TOC120. Interacts with SP1. Interacts with TIC236. In terms of tissue distribution, mostly expressed in young and actively dividing photosynthetic tissues and, to a lower extent, in old leaves and roots. Particularly low levels in leaves after etiolation.

It localises to the plastid. It is found in the chloroplast outer membrane. Its function is as follows. Essential protein. Mediates the insertion of proteins targeted to the outer membrane of chloroplasts. Required for the import of protein precursors into chloroplasts. Forms the voltage-dependent preprotein translocation channels (hydrophilic beta barrel) of the TOC complex in the chloroplastic outer membrane. The protein is Protein TOC75-3, chloroplastic of Arabidopsis thaliana (Mouse-ear cress).